The chain runs to 97 residues: Cobalt transport protein CbiN (97 aa).

2 helical membrane-spanning segments follow: residues 6-26 and 68-88; these read VLMI…YSGL and SLLF…FFGY.

This sequence belongs to the CbiN family. Forms an energy-coupling factor (ECF) transporter complex composed of an ATP-binding protein (A component, CbiO), a transmembrane protein (T component, CbiQ) and 2 possible substrate-capture proteins (S components, CbiM and CbiN) of unknown stoichimetry.

The protein resides in the cell membrane. It functions in the pathway cofactor biosynthesis; adenosylcobalamin biosynthesis. In terms of biological role, part of the energy-coupling factor (ECF) transporter complex CbiMNOQ involved in cobalt import. The protein is Cobalt transport protein CbiN of Methanococcus maripaludis (strain C5 / ATCC BAA-1333).